The following is a 659-amino-acid chain: Threonine--tRNA ligase (659 aa).

The TGS domain maps to 7 to 70; it reads VQATVTVTFP…TDDATVEIIT (64 aa). A catalytic region spans residues 255 to 557; that stretch reads DHRKLGAELE…LIEHTAGNFP (303 aa). Residues C353, H404, and H534 each coordinate Zn(2+).

The protein belongs to the class-II aminoacyl-tRNA synthetase family. Homodimer. Requires Zn(2+) as cofactor.

It localises to the cytoplasm. The enzyme catalyses tRNA(Thr) + L-threonine + ATP = L-threonyl-tRNA(Thr) + AMP + diphosphate + H(+). Functionally, catalyzes the attachment of threonine to tRNA(Thr) in a two-step reaction: L-threonine is first activated by ATP to form Thr-AMP and then transferred to the acceptor end of tRNA(Thr). Also edits incorrectly charged L-seryl-tRNA(Thr). The chain is Threonine--tRNA ligase from Chlorobium phaeobacteroides (strain BS1).